The sequence spans 399 residues: Tryptophan synthase beta chain (399 aa).

An N6-(pyridoxal phosphate)lysine modification is found at K91.

It belongs to the TrpB family. In terms of assembly, tetramer of two alpha and two beta chains. Requires pyridoxal 5'-phosphate as cofactor.

It catalyses the reaction (1S,2R)-1-C-(indol-3-yl)glycerol 3-phosphate + L-serine = D-glyceraldehyde 3-phosphate + L-tryptophan + H2O. The protein operates within amino-acid biosynthesis; L-tryptophan biosynthesis; L-tryptophan from chorismate: step 5/5. Functionally, the beta subunit is responsible for the synthesis of L-tryptophan from indole and L-serine. The chain is Tryptophan synthase beta chain from Shouchella clausii (strain KSM-K16) (Alkalihalobacillus clausii).